A 454-amino-acid polypeptide reads, in one-letter code: Bifunctional protein GlmU (454 aa).

Residues 1–232 (MTDRTCLSIV…VDNVIGINNR (232 aa)) are pyrophosphorylase. UDP-N-acetyl-alpha-D-glucosamine is bound by residues 11 to 14 (LAAG), Lys-25, Gln-78, and 83 to 84 (GT). Asp-108 contributes to the Mg(2+) binding site. The UDP-N-acetyl-alpha-D-glucosamine site is built by Gly-144, Glu-158, Asn-173, and Asn-230. Position 230 (Asn-230) interacts with Mg(2+). The linker stretch occupies residues 233–253 (AELAEAETIWQNRKRRELMLS). Residues 254–454 (GVTLIAPETV…AIKAAKSVSK (201 aa)) are N-acetyltransferase. UDP-N-acetyl-alpha-D-glucosamine contacts are provided by Arg-319 and Lys-337. The Proton acceptor role is filled by His-349. UDP-N-acetyl-alpha-D-glucosamine contacts are provided by Tyr-352 and Asn-363. Residues Ala-366, 372 to 373 (NY), Ser-391, Ser-409, and Arg-426 contribute to the acetyl-CoA site.

In the N-terminal section; belongs to the N-acetylglucosamine-1-phosphate uridyltransferase family. It in the C-terminal section; belongs to the transferase hexapeptide repeat family. As to quaternary structure, homotrimer. Mg(2+) is required as a cofactor.

It localises to the cytoplasm. The enzyme catalyses alpha-D-glucosamine 1-phosphate + acetyl-CoA = N-acetyl-alpha-D-glucosamine 1-phosphate + CoA + H(+). It catalyses the reaction N-acetyl-alpha-D-glucosamine 1-phosphate + UTP + H(+) = UDP-N-acetyl-alpha-D-glucosamine + diphosphate. Its pathway is nucleotide-sugar biosynthesis; UDP-N-acetyl-alpha-D-glucosamine biosynthesis; N-acetyl-alpha-D-glucosamine 1-phosphate from alpha-D-glucosamine 6-phosphate (route II): step 2/2. The protein operates within nucleotide-sugar biosynthesis; UDP-N-acetyl-alpha-D-glucosamine biosynthesis; UDP-N-acetyl-alpha-D-glucosamine from N-acetyl-alpha-D-glucosamine 1-phosphate: step 1/1. It functions in the pathway bacterial outer membrane biogenesis; LPS lipid A biosynthesis. Its function is as follows. Catalyzes the last two sequential reactions in the de novo biosynthetic pathway for UDP-N-acetylglucosamine (UDP-GlcNAc). The C-terminal domain catalyzes the transfer of acetyl group from acetyl coenzyme A to glucosamine-1-phosphate (GlcN-1-P) to produce N-acetylglucosamine-1-phosphate (GlcNAc-1-P), which is converted into UDP-GlcNAc by the transfer of uridine 5-monophosphate (from uridine 5-triphosphate), a reaction catalyzed by the N-terminal domain. This is Bifunctional protein GlmU from Brucella canis (strain ATCC 23365 / NCTC 10854 / RM-666).